The primary structure comprises 269 residues: Cell cycle regulator CcrZ (269 aa).

Positions 39, 76, 77, 78, and 80 each coordinate ATP. Residues 164–171 carry the Brenner's motif [HXDhX3N] motif; sequence HCDVNHNN. Residue aspartate 166 is the Proton acceptor of the active site. The short motif at 180 to 203 is the APH element; that stretch reads LYLIDWDGAMIADPAMDLGPLLYH.

This sequence belongs to the aminoglycoside phosphotransferase family. Monomer in solution. Interacts with DnaA (via domains I (1-82) and III (111-326)). Interacts with DnaB. Interacts with FtsZ.

The protein resides in the cytoplasm. It carries out the reaction D-ribose + ATP = D-ribose 5-phosphate + ADP + H(+). It catalyses the reaction 2-deoxy-D-ribose + ATP = 2-deoxy-D-ribose 5-phosphate + ADP + H(+). With respect to regulation, activated by D-ribose and 2-deoxy-D-ribose. Slightly activated by kanamycin and gentamicin. Plays a role in cell cycle regulation and chromosome integrity. Activates DnaA-dependent chromosomal DNA replication initiation ensuring that the chromosome is replicated at the right time during the cell cycle. May regulate replication initiation through phosphorylation of a possible second messenger or metabolite, and by interacting with replication initiation proteins. Has ATPase activity with D-ribose and 2-deoxy-D-ribose in vitro, but not with choline. Involved in DNA damage response. This Bacillus subtilis (strain 168) protein is Cell cycle regulator CcrZ.